The sequence spans 337 residues: Ketol-acid reductoisomerase (NADP(+)) (337 aa).

Positions 3 to 183 (VEMFYDDDAD…GGTRAGVIKT (181 aa)) constitute a KARI N-terminal Rossmann domain. Residues 26 to 29 (YGSQ), K49, S52, S54, and 84 to 87 (DTAQ) each bind NADP(+). H109 is a catalytic residue. G135 lines the NADP(+) pocket. The KARI C-terminal knotted domain occupies 184–329 (TFKEETETDL…KKLRDLMSWV (146 aa)). Residues D192, E196, E228, and E232 each coordinate Mg(2+). S253 contributes to the substrate binding site.

Belongs to the ketol-acid reductoisomerase family. Mg(2+) serves as cofactor.

It carries out the reaction (2R)-2,3-dihydroxy-3-methylbutanoate + NADP(+) = (2S)-2-acetolactate + NADPH + H(+). The catalysed reaction is (2R,3R)-2,3-dihydroxy-3-methylpentanoate + NADP(+) = (S)-2-ethyl-2-hydroxy-3-oxobutanoate + NADPH + H(+). It functions in the pathway amino-acid biosynthesis; L-isoleucine biosynthesis; L-isoleucine from 2-oxobutanoate: step 2/4. Its pathway is amino-acid biosynthesis; L-valine biosynthesis; L-valine from pyruvate: step 2/4. In terms of biological role, involved in the biosynthesis of branched-chain amino acids (BCAA). Catalyzes an alkyl-migration followed by a ketol-acid reduction of (S)-2-acetolactate (S2AL) to yield (R)-2,3-dihydroxy-isovalerate. In the isomerase reaction, S2AL is rearranged via a Mg-dependent methyl migration to produce 3-hydroxy-3-methyl-2-ketobutyrate (HMKB). In the reductase reaction, this 2-ketoacid undergoes a metal-dependent reduction by NADPH to yield (R)-2,3-dihydroxy-isovalerate. The polypeptide is Ketol-acid reductoisomerase (NADP(+)) (Rhodococcus jostii (strain RHA1)).